A 246-amino-acid chain; its full sequence is MTFTILPAVDVVNGQAVRLDQGEAGTEKSYGTPLESALRWQEQGAEWLHFVDLDAAFNRGSNHELMAEITRQLDIKVELTGGIRDDASLERALATGATRVNIGTAALEKPEWIADVIRRHGEKIAVDIAVRLENGEWRTKGNGWVSDGGDLWEVLERLDSQGCSRFVVTDVSKDGTLTGPNVDLLRDVAAATDAPIVASGGISTLEDVLGLAKYQDEGIDSVIIGKALYEHRFTLAEALEAVEKLG.

D10 serves as the catalytic Proton acceptor.

It belongs to the HisA/HisF family.

The protein resides in the cytoplasm. It catalyses the reaction 1-(5-phospho-beta-D-ribosyl)-5-[(5-phospho-beta-D-ribosylamino)methylideneamino]imidazole-4-carboxamide = 5-[(5-phospho-1-deoxy-D-ribulos-1-ylimino)methylamino]-1-(5-phospho-beta-D-ribosyl)imidazole-4-carboxamide. The protein operates within amino-acid biosynthesis; L-histidine biosynthesis; L-histidine from 5-phospho-alpha-D-ribose 1-diphosphate: step 4/9. The chain is 1-(5-phosphoribosyl)-5-[(5-phosphoribosylamino)methylideneamino] imidazole-4-carboxamide isomerase from Corynebacterium efficiens (strain DSM 44549 / YS-314 / AJ 12310 / JCM 11189 / NBRC 100395).